Consider the following 185-residue polypeptide: Elongation factor P (185 aa).

Belongs to the elongation factor P family.

It localises to the cytoplasm. The protein operates within protein biosynthesis; polypeptide chain elongation. Functionally, involved in peptide bond synthesis. Stimulates efficient translation and peptide-bond synthesis on native or reconstituted 70S ribosomes in vitro. Probably functions indirectly by altering the affinity of the ribosome for aminoacyl-tRNA, thus increasing their reactivity as acceptors for peptidyl transferase. This Thermosipho africanus (strain TCF52B) protein is Elongation factor P.